The chain runs to 156 residues: RING finger protein 224 (156 aa).

Residues 24 to 71 (CIICCSAYDLSGHLPRRLYCGHTFCQACVRRLDTPAPEQRWIPCPQCR) form an RING-type zinc finger.

The sequence is that of RING finger protein 224 (RNF224) from Homo sapiens (Human).